Consider the following 275-residue polypeptide: Putative phosphoenolpyruvate synthase regulatory protein (275 aa).

Residue 153 to 160 (GVSRSGKT) coordinates ADP.

Belongs to the pyruvate, phosphate/water dikinase regulatory protein family. PSRP subfamily.

The enzyme catalyses [pyruvate, water dikinase] + ADP = [pyruvate, water dikinase]-phosphate + AMP + H(+). It carries out the reaction [pyruvate, water dikinase]-phosphate + phosphate + H(+) = [pyruvate, water dikinase] + diphosphate. Functionally, bifunctional serine/threonine kinase and phosphorylase involved in the regulation of the phosphoenolpyruvate synthase (PEPS) by catalyzing its phosphorylation/dephosphorylation. In Nitrosomonas eutropha (strain DSM 101675 / C91 / Nm57), this protein is Putative phosphoenolpyruvate synthase regulatory protein.